Consider the following 351-residue polypeptide: UDP-N-acetylglucosamine--N-acetylmuramyl-(pentapeptide) pyrophosphoryl-undecaprenol N-acetylglucosamine transferase (351 aa).

UDP-N-acetyl-alpha-D-glucosamine contacts are provided by residues 12–14, N124, R160, S188, I239, 258–263, and Q283; these read TGG and ALTVCE.

This sequence belongs to the glycosyltransferase 28 family. MurG subfamily.

The protein localises to the cell inner membrane. The enzyme catalyses di-trans,octa-cis-undecaprenyl diphospho-N-acetyl-alpha-D-muramoyl-L-alanyl-D-glutamyl-meso-2,6-diaminopimeloyl-D-alanyl-D-alanine + UDP-N-acetyl-alpha-D-glucosamine = di-trans,octa-cis-undecaprenyl diphospho-[N-acetyl-alpha-D-glucosaminyl-(1-&gt;4)]-N-acetyl-alpha-D-muramoyl-L-alanyl-D-glutamyl-meso-2,6-diaminopimeloyl-D-alanyl-D-alanine + UDP + H(+). Its pathway is cell wall biogenesis; peptidoglycan biosynthesis. Its function is as follows. Cell wall formation. Catalyzes the transfer of a GlcNAc subunit on undecaprenyl-pyrophosphoryl-MurNAc-pentapeptide (lipid intermediate I) to form undecaprenyl-pyrophosphoryl-MurNAc-(pentapeptide)GlcNAc (lipid intermediate II). This Actinobacillus pleuropneumoniae serotype 5b (strain L20) protein is UDP-N-acetylglucosamine--N-acetylmuramyl-(pentapeptide) pyrophosphoryl-undecaprenol N-acetylglucosamine transferase.